The primary structure comprises 429 residues: Fumarylacetoacetase (429 aa).

Residue Asp-139 coordinates Ca(2+). His-146 functions as the Proton acceptor in the catalytic mechanism. Substrate is bound at residue Arg-155. Ca(2+) contacts are provided by Glu-212, Glu-214, and Asp-246. Asp-246 is a binding site for Mg(2+). Position 253 (Gln-253) interacts with substrate. 2 residues coordinate Mg(2+): Lys-266 and Thr-270. Thr-363 contributes to the substrate binding site.

It belongs to the FAH family. Ca(2+) is required as a cofactor. It depends on Mg(2+) as a cofactor.

It carries out the reaction 4-fumarylacetoacetate + H2O = acetoacetate + fumarate + H(+). Its pathway is amino-acid degradation; L-phenylalanine degradation; acetoacetate and fumarate from L-phenylalanine: step 6/6. Its function is as follows. Converts fumarylacetoacetate to acetoacetate and fumarate. Involved in tyrosine catabolic pathway. Catalyzes the final step in the tyrosine degradation pathway. In Oryza sativa subsp. japonica (Rice), this protein is Fumarylacetoacetase.